A 223-amino-acid chain; its full sequence is RNA-free ribonuclease P (223 aa).

It belongs to the HARP family.

It catalyses the reaction Endonucleolytic cleavage of RNA, removing 5'-extranucleotides from tRNA precursor.. In terms of biological role, RNA-free RNase P that catalyzes the removal of the 5'-leader sequence from pre-tRNA to produce the mature 5'-terminus. This is RNA-free ribonuclease P from Methanococcus maripaludis (strain C5 / ATCC BAA-1333).